We begin with the raw amino-acid sequence, 318 residues long: tRNA uridine(34) hydroxylase (318 aa).

One can recognise a Rhodanese domain in the interval 123-217 (EDDDTVIIDA…YGKDPETKGQ (95 aa)). Cysteine 177 acts as the Cysteine persulfide intermediate in catalysis.

It belongs to the TrhO family.

The enzyme catalyses uridine(34) in tRNA + AH2 + O2 = 5-hydroxyuridine(34) in tRNA + A + H2O. Catalyzes oxygen-dependent 5-hydroxyuridine (ho5U) modification at position 34 in tRNAs. The chain is tRNA uridine(34) hydroxylase from Staphylococcus aureus (strain MRSA252).